We begin with the raw amino-acid sequence, 65 residues long: Large ribosomal subunit protein uL29 (65 aa).

It belongs to the universal ribosomal protein uL29 family.

This is Large ribosomal subunit protein uL29 from Leptothrix cholodnii (strain ATCC 51168 / LMG 8142 / SP-6) (Leptothrix discophora (strain SP-6)).